A 320-amino-acid chain; its full sequence is GTP 3',8-cyclase (320 aa).

Residues 5–225 (QFGRKINYLR…IQLIKKDEKA (221 aa)) form the Radical SAM core domain. Arg-14 is a binding site for GTP. Residues Cys-21 and Cys-25 each coordinate [4Fe-4S] cluster. S-adenosyl-L-methionine is bound at residue Tyr-27. A [4Fe-4S] cluster-binding site is contributed by Cys-28. Arg-64 contributes to the GTP binding site. Residue Gly-68 participates in S-adenosyl-L-methionine binding. Thr-95 lines the GTP pocket. Ser-119 is a binding site for S-adenosyl-L-methionine. Residue Lys-155 coordinates GTP. Met-189 lines the S-adenosyl-L-methionine pocket. [4Fe-4S] cluster is bound by residues Cys-248 and Cys-251. 253-255 (RIR) is a binding site for GTP. Cys-265 is a binding site for [4Fe-4S] cluster.

This sequence belongs to the radical SAM superfamily. MoaA family. As to quaternary structure, monomer and homodimer. [4Fe-4S] cluster serves as cofactor.

The enzyme catalyses GTP + AH2 + S-adenosyl-L-methionine = (8S)-3',8-cyclo-7,8-dihydroguanosine 5'-triphosphate + 5'-deoxyadenosine + L-methionine + A + H(+). The protein operates within cofactor biosynthesis; molybdopterin biosynthesis. Catalyzes the cyclization of GTP to (8S)-3',8-cyclo-7,8-dihydroguanosine 5'-triphosphate. In Campylobacter jejuni (strain RM1221), this protein is GTP 3',8-cyclase.